Here is an 885-residue protein sequence, read N- to C-terminus: Initiator protein NS1 (885 aa).

Residues alanine 404 to proline 477 form a disordered region. A compositionally biased stretch (polar residues) spans serine 409–threonine 423. Residues glutamine 452–alanine 465 show a composition bias toward gly residues.

This sequence belongs to the parvoviruses initiator protein NS1 family. Homooligomer. It depends on Mg(2+) as a cofactor.

It is found in the host nucleus. It carries out the reaction ATP + H2O = ADP + phosphate + H(+). Multifunctional protein which displays endonuclease and helicase activities required for initiating and directing viral DNA replication. Also plays a role in viral packaging and transactivation of several promoters. Binds site-specifically to 2-3 approximate tandem copies within the origins of replication (Ori), unwinds this hairpin region and nicks one DNA strand thereby initiating the rolling circle replication (RCR). This is Initiator protein NS1 from Bombyx mori densovirus (BmDNV).